Reading from the N-terminus, the 147-residue chain is Auxin-responsive protein SAUR41 (147 aa).

The protein belongs to the ARG7 family. In terms of tissue distribution, specifically expressed in the quiescent center and cortex or endodermis initials of root stem niches. Expressed in vascular tissues from hypocotyls, petioles and cotyledons.

It localises to the cytoplasm. Functionally, plays a role in the regulation of cell expansion, root meristem patterning and auxin transport. The chain is Auxin-responsive protein SAUR41 from Arabidopsis thaliana (Mouse-ear cress).